We begin with the raw amino-acid sequence, 122 residues long: MLKKADKNANRLQRHKRVRRKISGTSQRPRLCVFRSANNIYAQIIDDTKRVTLVAASSLEAEVKSAVNHTGNKEAAKKVGELVAKKAVEKGITEVVFDRGGYLYHGRIQELAEGAREAGLKF.

The segment at 1-24 (MLKKADKNANRLQRHKRVRRKISG) is disordered. Residues 12–22 (LQRHKRVRRKI) show a composition bias toward basic residues.

This sequence belongs to the universal ribosomal protein uL18 family. In terms of assembly, part of the 50S ribosomal subunit; part of the 5S rRNA/L5/L18/L25 subcomplex. Contacts the 5S and 23S rRNAs.

This is one of the proteins that bind and probably mediate the attachment of the 5S RNA into the large ribosomal subunit, where it forms part of the central protuberance. This chain is Large ribosomal subunit protein uL18, found in Clostridioides difficile (strain 630) (Peptoclostridium difficile).